The sequence spans 247 residues: Cell division protein ZapD (247 aa).

Belongs to the ZapD family. In terms of assembly, interacts with FtsZ.

It localises to the cytoplasm. Cell division factor that enhances FtsZ-ring assembly. Directly interacts with FtsZ and promotes bundling of FtsZ protofilaments, with a reduction in FtsZ GTPase activity. The protein is Cell division protein ZapD of Salmonella choleraesuis (strain SC-B67).